The sequence spans 102 residues: Small ribosomal subunit protein uS10 (102 aa).

Belongs to the universal ribosomal protein uS10 family. Part of the 30S ribosomal subunit.

Functionally, involved in the binding of tRNA to the ribosomes. The chain is Small ribosomal subunit protein uS10 from Bacillus cereus (strain ATCC 10987 / NRS 248).